A 237-amino-acid polypeptide reads, in one-letter code: RNA-binding protein 38 (237 aa).

Residues Met-1–Gly-24 are disordered. An RRM domain is found at Thr-32–Leu-109.

The protein belongs to the RBM38 family. As to expression, expressed in cardiac and skeletal muscle tissues.

The protein resides in the cytoplasm. It localises to the cytosol. The protein localises to the nucleus. RNA-binding protein that specifically bind the 3'-UTR of CDKN1A transcripts, leading to maintain the stability of CDKN1A transcripts, thereby acting as a mediator of the p53/TP53 family to regulate CDKN1A. CDKN1A is a cyclin-dependent kinase inhibitor transcriptionally regulated by the p53/TP53 family to induce cell cycle arrest. Has the ability to induce cell cycle arrest in G1 and maintain the stability of CDKN1A transcripts induced by p53/TP53. Also acts as a mRNA splicing factor. Specifically regulates the expression of FGFR2-IIIb, an epithelial cell-specific isoform of FGFR2. Plays a role in myogenic differentiation. In Mus musculus (Mouse), this protein is RNA-binding protein 38 (Rbm38).